A 325-amino-acid polypeptide reads, in one-letter code: Reticulocalbin-1 (325 aa).

Residues 1-23 form the signal peptide; the sequence is MARGGRLGLALGLLLALVLALRA. Asn47 carries an N-linked (GlcNAc...) asparagine; partial glycan. Residues Ser49 and Ser74 each carry the phosphoserine modification. EF-hand domains are found at residues 73 to 108, 109 to 144, 160 to 195, 197 to 232, 238 to 273, and 274 to 309; these read ESKE…VQKR, YIYD…YYLG, KMLP…EEFE, MKEI…HEDN, WVLS…QDYD, and HAQA…FVGS. 28 residues coordinate Ca(2+): Asp86, Asp88, Asp90, Glu97, Asp122, Asp124, Asp126, Lys128, Glu133, Asp173, Asp175, Asp177, Thr179, Glu184, Asp210, Asn212, Asp214, Glu221, Asp251, Asn253, Asp255, Lys257, Glu262, Asp287, Asn289, Asp291, Met293, and Glu298. Positions 322 to 325 match the Prevents secretion from ER motif; the sequence is HDEL.

The protein belongs to the CREC family. Post-translationally, O-glycosylated. O-mannosylated by POMT1 and POMT2 and elongated by POMGNT1.

It localises to the endoplasmic reticulum lumen. Its function is as follows. May regulate calcium-dependent activities in the endoplasmic reticulum lumen or post-ER compartment. In Mus musculus (Mouse), this protein is Reticulocalbin-1 (Rcn1).